Consider the following 946-residue polypeptide: Glycine dehydrogenase (decarboxylating) (946 aa).

N6-(pyridoxal phosphate)lysine is present on Lys700.

This sequence belongs to the GcvP family. As to quaternary structure, the glycine cleavage system is composed of four proteins: P, T, L and H. The cofactor is pyridoxal 5'-phosphate.

The catalysed reaction is N(6)-[(R)-lipoyl]-L-lysyl-[glycine-cleavage complex H protein] + glycine + H(+) = N(6)-[(R)-S(8)-aminomethyldihydrolipoyl]-L-lysyl-[glycine-cleavage complex H protein] + CO2. Functionally, the glycine cleavage system catalyzes the degradation of glycine. The P protein binds the alpha-amino group of glycine through its pyridoxal phosphate cofactor; CO(2) is released and the remaining methylamine moiety is then transferred to the lipoamide cofactor of the H protein. This chain is Glycine dehydrogenase (decarboxylating), found in Pseudomonas fluorescens (strain SBW25).